Consider the following 769-residue polypeptide: 5-methyltetrahydropteroyltriglutamate--homocysteine methyltransferase (769 aa).

Residues 18 to 21 (RELK) and lysine 127 contribute to the 5-methyltetrahydropteroyltri-L-glutamate site. Residues 447 to 449 (IGS) and glutamate 500 contribute to the L-homocysteine site. Residues 447–449 (IGS) and glutamate 500 each bind L-methionine. 5-methyltetrahydropteroyltri-L-glutamate-binding positions include 531-532 (RC) and tryptophan 577. Aspartate 615 lines the L-homocysteine pocket. An L-methionine-binding site is contributed by aspartate 615. Glutamate 621 is a binding site for 5-methyltetrahydropteroyltri-L-glutamate. The Zn(2+) site is built by histidine 657, cysteine 659, and glutamate 681. Catalysis depends on histidine 710, which acts as the Proton donor. A Zn(2+)-binding site is contributed by cysteine 742.

Belongs to the vitamin-B12 independent methionine synthase family. Requires Zn(2+) as cofactor.

It carries out the reaction 5-methyltetrahydropteroyltri-L-glutamate + L-homocysteine = tetrahydropteroyltri-L-glutamate + L-methionine. It functions in the pathway amino-acid biosynthesis; L-methionine biosynthesis via de novo pathway; L-methionine from L-homocysteine (MetE route): step 1/1. Its function is as follows. Catalyzes the transfer of a methyl group from 5-methyltetrahydrofolate to homocysteine resulting in methionine formation. The protein is 5-methyltetrahydropteroyltriglutamate--homocysteine methyltransferase of Chelativorans sp. (strain BNC1).